We begin with the raw amino-acid sequence, 109 residues long: Small ribosomal subunit protein bS18c (109 aa).

Residues glycine 82 to phenylalanine 109 form a disordered region.

Belongs to the bacterial ribosomal protein bS18 family. Part of the 30S ribosomal subunit.

Its subcellular location is the plastid. This is Small ribosomal subunit protein bS18c from Cuscuta reflexa (Southern Asian dodder).